The sequence spans 319 residues: Coproporphyrin III ferrochelatase 2 (319 aa).

Fe-coproporphyrin III-binding positions include Tyr13, Arg30, Arg46–Tyr47, Ser54, and Tyr125. 2 residues coordinate Fe(2+): His181 and Glu262.

This sequence belongs to the ferrochelatase family.

It localises to the cytoplasm. The enzyme catalyses Fe-coproporphyrin III + 2 H(+) = coproporphyrin III + Fe(2+). It functions in the pathway porphyrin-containing compound metabolism; protoheme biosynthesis. In terms of biological role, involved in coproporphyrin-dependent heme b biosynthesis. Catalyzes the insertion of ferrous iron into coproporphyrin III to form Fe-coproporphyrin III. The chain is Coproporphyrin III ferrochelatase 2 from Bacillus cereus (strain ZK / E33L).